The chain runs to 181 residues: Large ribosomal subunit protein uL30 (181 aa).

The protein belongs to the universal ribosomal protein uL30 family. As to quaternary structure, part of the 50S ribosomal subunit.

This Hyperthermus butylicus (strain DSM 5456 / JCM 9403 / PLM1-5) protein is Large ribosomal subunit protein uL30.